The sequence spans 452 residues: Phosphoglucosamine mutase (452 aa).

Ser-104 functions as the Phosphoserine intermediate in the catalytic mechanism. Mg(2+) contacts are provided by Ser-104, Asp-246, Asp-248, and Asp-250. Ser-104 bears the Phosphoserine mark.

It belongs to the phosphohexose mutase family. Mg(2+) serves as cofactor. Post-translationally, activated by phosphorylation.

The catalysed reaction is alpha-D-glucosamine 1-phosphate = D-glucosamine 6-phosphate. Its function is as follows. Catalyzes the conversion of glucosamine-6-phosphate to glucosamine-1-phosphate. The protein is Phosphoglucosamine mutase of Streptomyces griseus subsp. griseus (strain JCM 4626 / CBS 651.72 / NBRC 13350 / KCC S-0626 / ISP 5235).